The chain runs to 438 residues: Aminopeptidase E (438 aa).

Active-site residues include C70, H362, and N383.

This sequence belongs to the peptidase C1 family.

Its subcellular location is the cytoplasm. Functionally, can hydrolyze internal peptide bonds in Met-enkephalin and bradykinin; however, hydrolysis of alpha-, beta-, and kappa-caseins is not detected. This is Aminopeptidase E (pepE) from Lactobacillus helveticus (Lactobacillus suntoryeus).